A 90-amino-acid polypeptide reads, in one-letter code: ESAT-6-like protein EsxE (90 aa).

This sequence belongs to the WXG100 family. ESAT-6 subfamily.

Its subcellular location is the secreted. In Mycobacterium tuberculosis (strain CDC 1551 / Oshkosh), this protein is ESAT-6-like protein EsxE.